Reading from the N-terminus, the 364-residue chain is GDSL esterase/lipase At1g29660 (364 aa).

A signal peptide spans 1–26 (MESYLRKWCLVSVWVLLLGLGFKVKA). The Nucleophile role is filled by Ser39. Residues Asp328 and His331 each act as charge relay system in the active site.

This sequence belongs to the 'GDSL' lipolytic enzyme family. As to expression, found in phloem exudates.

The protein resides in the secreted. Its subcellular location is the extracellular space. The protein localises to the apoplast. Functionally, involved in EDS1-dependent systemic acquired resistance, maybe in phloem-mediated long-distance signaling. In Arabidopsis thaliana (Mouse-ear cress), this protein is GDSL esterase/lipase At1g29660.